Consider the following 303-residue polypeptide: MPTTAAFLRALYILTTLRGIGTSHEVRNIKHGSESSASRARFLLHTLVIIAAKYLVLDMMTFQPPSPEDTDRMFGEGKEYLLFRPDGLPPPKMQDILTNLGVTLLGWGPIGSWFIEVHYRILSVASVGLGISQPHQWPPLFGSITEAHTLRRFWANFWHQLFRWPMQGLSSFLCRDVLRLPRPSLAERYLKITLVFAISSCLHLAIDGRAGIMLPRSGALRCFLLQPVGIILEDGAQALYRRLRGDAPLSKWTRAVGYIWTWAFLSLVAPMYNFPLFRYQDPARNGVPVPVLRPAMEYFRVKG.

An N-terminal signal peptide occupies residues 1–23 (MPTTAAFLRALYILTTLRGIGTS). 3 helical membrane passes run 42 to 62 (FLLHTLVIIAAKYLVLDMMTF), 194 to 214 (LVFAISSCLHLAIDGRAGIML), and 257 to 277 (GYIWTWAFLSLVAPMYNFPLF).

It belongs to the wax synthase family.

The protein resides in the membrane. Its pathway is mycotoxin biosynthesis. In terms of biological role, acetyltransferase; part of the gene cluster that mediates the biosynthesis of acetylaranotin, a member of the epipolythiodioxopiperazine (ETP) class of toxins characterized by a disulfide-bridged cyclic dipeptide. The first step of acetylaranotin biosynthesis is performed by the NRPS ataP which produces diketopiperazine cyclo-L-Phe-L-Phe via the condensation of 2 phenylalanines (L-Phe). The ataC domain of ataTC then catalyzes the formation of bishydroxylation of cyclo-L-Phe-L-Phe. The glutathione S-transferase domain ataG in ataIMG further catalyzes the conjugation of two glutathiones to the bishydroxylated intermediate. Next, the dipeptidase ataJ removes the Glu residues. The following step is performed by the carbon sulfur lyase domain ataI of ataIMG which may convert the bis-cysteinyl adduct to yield an epidithiol intermediate. The ataT domain from ataTC then catalyzes the oxidation of the free dithiols, followed by a cyclization step catalyzed by the cytochrome P450 ataF. AtaF probably acts as an epoxidase to promote a dual epoxidation formation at C8 and C9 along with C8' and C9', followed by the spontaneous nucleophilic attack of the amide nitrogens N10 and N10' to yield an intermediate with the pyrrolidine partial structure. The final steps of acetylaranotin biosynthesis involve the acetylation and ring rearrangement of an epitetrathiodiketopiperazine intermediate to produce acetylaranotin. AtaH probably catalyzes the acetylation of epitetrathiodiketopiperazine to produce a diacetate and ataY is responsible for the formation of the dihydrooxepin moiety that converts the diacetate intermediate to acetylaranotin via acetylapoaranotin. Both enzymes could function independently in the absence of the other. The acetylaranotin bis-thiomethyltransferase ataS located outside of acetylaranotin gene cluster is the main thiomethyltransferase responsible for converting acetylaranotin and its related intermediates to their methylated forms. The chain is Acetyltransferase ataH from Aspergillus terreus (strain NIH 2624 / FGSC A1156).